Reading from the N-terminus, the 607-residue chain is Elongation factor 4 (607 aa).

The tr-type G domain occupies 11–193; sequence SKIRNFSIIA…QIVEKVPAPT (183 aa). Residues 23-28 and 140-143 each bind GTP; these read DHGKST and NKID.

It belongs to the TRAFAC class translation factor GTPase superfamily. Classic translation factor GTPase family. LepA subfamily.

It is found in the cell membrane. The enzyme catalyses GTP + H2O = GDP + phosphate + H(+). In terms of biological role, required for accurate and efficient protein synthesis under certain stress conditions. May act as a fidelity factor of the translation reaction, by catalyzing a one-codon backward translocation of tRNAs on improperly translocated ribosomes. Back-translocation proceeds from a post-translocation (POST) complex to a pre-translocation (PRE) complex, thus giving elongation factor G a second chance to translocate the tRNAs correctly. Binds to ribosomes in a GTP-dependent manner. The protein is Elongation factor 4 of Bacillus anthracis (strain CDC 684 / NRRL 3495).